The chain runs to 116 residues: MRLIYIFMVSIVTTLHASSSAILDPNDVKFTTKNVESPDSSDAAYVAGRILRGTDGNVNREQERKILLKRKHKRHYYKPSHAHDSAGSEAFHSAKKALKSSIRATKARLVPPYQRR.

The first 17 residues, 1-17, serve as a signal peptide directing secretion; the sequence is MRLIYIFMVSIVTTLHA. A RxLR-dEER motif is present at residues 49-64; sequence RILRGTDGNVNREQER.

This sequence belongs to the RxLR effector family.

It localises to the secreted. Its subcellular location is the host cytoplasm. The protein resides in the host nucleus. In terms of biological role, effector that acts as a broad suppressor of cell death to interrupt plant immunity. Inhibits cell death induced by cell death-inducing proteins, including the PAMP elicitor INF1 from P.infestans. The polypeptide is Secreted RxLR effector protein 9 (Plasmopara viticola (Downy mildew of grapevine)).